Consider the following 474-residue polypeptide: Cyclin-dependent kinase 18 (474 aa).

Phosphoserine is present on residues serine 14, serine 74, serine 89, serine 98, serine 117, and serine 132. The segment at 44 to 87 (DLQLGPLGRDPLQECSTFSPTDSGEEPGQLSPGVQFQRRQNQRR) is disordered. The region spanning 144–425 (YVKLDKLGEG…AEAALSHPYF (282 aa)) is the Protein kinase domain. ATP is bound by residues 150–158 (LGEGTYATV) and lysine 173. Catalysis depends on aspartate 265, which acts as the Proton acceptor. Phosphoserine occurs at positions 440 and 443.

Belongs to the protein kinase superfamily. CMGC Ser/Thr protein kinase family. CDC2/CDKX subfamily.

It catalyses the reaction L-seryl-[protein] + ATP = O-phospho-L-seryl-[protein] + ADP + H(+). The catalysed reaction is L-threonyl-[protein] + ATP = O-phospho-L-threonyl-[protein] + ADP + H(+). Functionally, may play a role in signal transduction cascades in terminally differentiated cells. In Pongo abelii (Sumatran orangutan), this protein is Cyclin-dependent kinase 18 (CDK18).